The chain runs to 141 residues: Nucleoside diphosphate kinase (141 aa).

The ATP site is built by Lys11, Phe59, Arg87, Thr93, Arg104, and Asn114. His117 functions as the Pros-phosphohistidine intermediate in the catalytic mechanism.

It belongs to the NDK family. In terms of assembly, homotetramer. It depends on Mg(2+) as a cofactor.

The protein resides in the cytoplasm. It carries out the reaction a 2'-deoxyribonucleoside 5'-diphosphate + ATP = a 2'-deoxyribonucleoside 5'-triphosphate + ADP. It catalyses the reaction a ribonucleoside 5'-diphosphate + ATP = a ribonucleoside 5'-triphosphate + ADP. Its function is as follows. Major role in the synthesis of nucleoside triphosphates other than ATP. The ATP gamma phosphate is transferred to the NDP beta phosphate via a ping-pong mechanism, using a phosphorylated active-site intermediate. The chain is Nucleoside diphosphate kinase from Leptothrix cholodnii (strain ATCC 51168 / LMG 8142 / SP-6) (Leptothrix discophora (strain SP-6)).